A 540-amino-acid polypeptide reads, in one-letter code: Collagen alpha-1(XXIII) chain (540 aa).

The segment covering 1–26 has biased composition (gly residues); it reads MGPGERAGGGGDAGKGNAAGGGGGGR. The interval 1–28 is disordered; the sequence is MGPGERAGGGGDAGKGNAAGGGGGGRSA. The Cytoplasmic segment spans residues 1 to 34; it reads MGPGERAGGGGDAGKGNAAGGGGGGRSATTAGSR. Residues 35 to 56 traverse the membrane as a helical; Signal-anchor for type II membrane protein segment; that stretch reads AVSALCLLLSVGSAAACLLLGV. Topologically, residues 57–540 are extracellular; it reads QAAALQGRVA…GLPVPGCWHK (484 aa). Disordered regions lie at residues 109 to 304 and 316 to 540; these read AREA…GEQG and LDAL…CWHK. Collagen-like domains are found at residues 124-243, 251-305, 321-380, 412-460, and 463-522; these read GRRG…PGKK, QPGP…EQGD, GPPG…MGLS, GPPG…GPPG, and GLPG…PGLD. Low complexity-rich tracts occupy residues 140–156 and 168–183; these read QSGR…DGKP and PGDF…DGAA. Residues 185 to 195 show a composition bias toward pro residues; that stretch reads PPGPPGPPGAR. Residues 322–334 are compositionally biased toward pro residues; sequence PPGPQGPPGPPGI. Residues 350–362 are compositionally biased toward basic and acidic residues; that stretch reads DGEKGPKGQKGDP. Positions 411-422 are enriched in pro residues; it reads PGPPGPPGPPGP. Composition is skewed to basic and acidic residues over residues 435–444 and 486–503; these read DGAKGEKGAS and RGEK…ERGV.

In terms of assembly, homotrimer. In terms of processing, undergoes proteolytic cleavage by furin protease to yield a 60 kDa soluble form that forms a homotrimer and exhibits a low affinity interaction with heparin.

Its subcellular location is the cell membrane. The polypeptide is Collagen alpha-1(XXIII) chain (COL23A1) (Homo sapiens (Human)).